We begin with the raw amino-acid sequence, 172 residues long: Small ribosomal subunit protein uS5 (172 aa).

The S5 DRBM domain occupies 15–78 (LNDKLIFINR…ANAKRNLSRI (64 aa)).

It belongs to the universal ribosomal protein uS5 family. As to quaternary structure, part of the 30S ribosomal subunit. Contacts proteins S4 and S8.

In terms of biological role, with S4 and S12 plays an important role in translational accuracy. Functionally, located at the back of the 30S subunit body where it stabilizes the conformation of the head with respect to the body. This is Small ribosomal subunit protein uS5 from Dehalococcoides mccartyi (strain ATCC BAA-2266 / KCTC 15142 / 195) (Dehalococcoides ethenogenes (strain 195)).